Consider the following 362-residue polypeptide: 3-isopropylmalate dehydrogenase (362 aa).

Residue 78–91 (GPKWEHLAPNDQPE) coordinates NAD(+). Residues Arg-99, Arg-109, Arg-138, and Asp-227 each contribute to the substrate site. 3 residues coordinate Mg(2+): Asp-227, Asp-251, and Asp-255. 285–297 (GSAPDIAGKNIAN) serves as a coordination point for NAD(+).

This sequence belongs to the isocitrate and isopropylmalate dehydrogenases family. LeuB type 1 subfamily. In terms of assembly, homodimer. Mg(2+) is required as a cofactor. Requires Mn(2+) as cofactor.

It is found in the cytoplasm. It carries out the reaction (2R,3S)-3-isopropylmalate + NAD(+) = 4-methyl-2-oxopentanoate + CO2 + NADH. It functions in the pathway amino-acid biosynthesis; L-leucine biosynthesis; L-leucine from 3-methyl-2-oxobutanoate: step 3/4. Its function is as follows. Catalyzes the oxidation of 3-carboxy-2-hydroxy-4-methylpentanoate (3-isopropylmalate) to 3-carboxy-4-methyl-2-oxopentanoate. The product decarboxylates to 4-methyl-2 oxopentanoate. This is 3-isopropylmalate dehydrogenase from Photobacterium profundum (strain SS9).